A 105-amino-acid chain; its full sequence is Phosphoribosyl-ATP pyrophosphatase (105 aa).

Belongs to the PRA-PH family.

The protein localises to the cytoplasm. The catalysed reaction is 1-(5-phospho-beta-D-ribosyl)-ATP + H2O = 1-(5-phospho-beta-D-ribosyl)-5'-AMP + diphosphate + H(+). It participates in amino-acid biosynthesis; L-histidine biosynthesis; L-histidine from 5-phospho-alpha-D-ribose 1-diphosphate: step 2/9. The protein is Phosphoribosyl-ATP pyrophosphatase of Ruthia magnifica subsp. Calyptogena magnifica.